The primary structure comprises 299 residues: MKPDAHHVKQFLLRLQDDICQKLSAVDGANFVEDSWRREAGGGGRSRVLRNGGIFEQAGVNFSHVHGDAMPASATAHRPELAGRSFEAMGVSLVVHPHNPYIPTSHANVRFFIAEKPGADPVWWFGGGLDLTPYYGFEEDAVHWHRTARDLCQPFGDNVYPRYKKWCDDYFFLKHRNEQRGIGGLFFDDLNTPDFDHCFAFMQAVGNGYTEAYLPIVERRKAMVWGERERNFQLYRRGRYVEFNLVWDRGTLFGLQTGGRTESILMSMPPLVRWEYDWQPEAGSPEAALSEFIQVRDWI.

Serine 92 is a binding site for substrate. A divalent metal cation contacts are provided by histidine 96 and histidine 106. Residue histidine 106 is the Proton donor of the active site. 108-110 (NVR) contacts substrate. 2 residues coordinate a divalent metal cation: histidine 145 and histidine 175. The tract at residues 240-275 (YVEFNLVWDRGTLFGLQTGGRTESILMSMPPLVRWE) is important for dimerization. Position 258 to 260 (258 to 260 (GGR)) interacts with substrate.

The protein belongs to the aerobic coproporphyrinogen-III oxidase family. As to quaternary structure, homodimer. The cofactor is a divalent metal cation.

It is found in the cytoplasm. It catalyses the reaction coproporphyrinogen III + O2 + 2 H(+) = protoporphyrinogen IX + 2 CO2 + 2 H2O. The protein operates within porphyrin-containing compound metabolism; protoporphyrin-IX biosynthesis; protoporphyrinogen-IX from coproporphyrinogen-III (O2 route): step 1/1. Involved in the heme biosynthesis. Catalyzes the aerobic oxidative decarboxylation of propionate groups of rings A and B of coproporphyrinogen-III to yield the vinyl groups in protoporphyrinogen-IX. The sequence is that of Oxygen-dependent coproporphyrinogen-III oxidase from Salmonella enteritidis PT4 (strain P125109).